The sequence spans 462 residues: Cathepsin F (462 aa).

The first 19 residues, 1–19, serve as a signal peptide directing secretion; that stretch reads MAPLLQLLWLLTLLSTVAL. Positions 20–248 are cleaved as a propeptide — activation peptide; it reads SPVPAKPWAD…MSPAKSINDL (229 aa). N-linked (GlcNAc...) asparagine glycosylation is found at Asn35, Asn138, and Asn173. 2 cysteine pairs are disulfide-bonded: Cys270-Cys311 and Cys304-Cys344. Cys273 is a catalytic residue. Residues Asn345 and Asn356 are each glycosylated (N-linked (GlcNAc...) asparagine). A disulfide bridge links Cys402 with Cys450. His409 is a catalytic residue. An N-linked (GlcNAc...) asparagine glycan is attached at Asn418. The active site involves Asn429.

Belongs to the peptidase C1 family.

It localises to the lysosome. The catalysed reaction is The recombinant enzyme cleaves synthetic substrates with Phe and Leu (better than Val) in P2, with high specificity constant (kcat/Km) comparable to that of cathepsin L.. In terms of biological role, thiol protease which is believed to participate in intracellular degradation and turnover of proteins. Has also been implicated in tumor invasion and metastasis. In Mus musculus (Mouse), this protein is Cathepsin F (Ctsf).